The following is a 346-amino-acid chain: Protein STAR1 (346 aa).

Residues 23–48 (QRPPPNGTVHACSKSRPPQLEPGKVG) form a disordered region. An ABC transporter domain is found at 112 to 344 (IRVRGLTRRS…KHPMARRFLE (233 aa)). ATP is bound at residue 146–153 (GPSGSGKS).

This sequence belongs to the ABC transporter superfamily. ABCI family. As to quaternary structure, interacts with STAR2. Expressed in roots.

It localises to the membrane. Associates with STAR2 to form a functional transmembrane ABC transporter required for detoxification of aluminum (Al) in roots. Can specifically transport UDP-glucose. This is Protein STAR1 from Oryza sativa subsp. japonica (Rice).